Reading from the N-terminus, the 170-residue chain is MTAPAKKPSAQEGLFWKTKTLEQMSGPEWESLCDGCARCCLEKLEDEDSGKIYFTHVSCRLLDAGLCGCKDYANRSDQVPDCVRLDPANVRTLNWLPPSCAYKLVAEGRDLYWWHPLISGDPNTVHEAGVSVRGRVQGTELDVNDEHLEQHIVQWPGLLPKRARLKKRPA.

This sequence belongs to the UPF0260 family.

In Rhodopseudomonas palustris (strain BisB18), this protein is UPF0260 protein RPC_1790.